A 418-amino-acid polypeptide reads, in one-letter code: UPF0261 protein BMEII0128 (418 aa).

This sequence belongs to the UPF0261 family.

The protein is UPF0261 protein BMEII0128 of Brucella melitensis biotype 1 (strain ATCC 23456 / CCUG 17765 / NCTC 10094 / 16M).